The sequence spans 92 residues: VNCGQVNKALSSCVPFLTGFDTTPSLTCCAGVMELKRLAPTVKDKRIACECVKTAAARYPNIREDAASSLPYKCGVVINVPISKTTNCHEIN.

4 disulfides stabilise this stretch: cysteine 3–cysteine 51, cysteine 13–cysteine 28, cysteine 29–cysteine 74, and cysteine 49–cysteine 88.

This sequence belongs to the plant LTP family.

Functionally, plant non-specific lipid-transfer proteins transfer phospholipids as well as galactolipids across membranes. May play a role in wax or cutin deposition in the cell walls of expanding epidermal cells and certain secretory tissues. This is Non-specific lipid-transfer protein B from Ricinus communis (Castor bean).